A 365-amino-acid polypeptide reads, in one-letter code: tRNA N6-adenosine threonylcarbamoyltransferase (365 aa).

Fe cation contacts are provided by His111 and His115. Substrate is bound by residues 140–144 (IVSGG), Asp173, Gly186, and Asn298. Residue Asp323 coordinates Fe cation.

The protein belongs to the KAE1 / TsaD family. It depends on Fe(2+) as a cofactor.

It localises to the cytoplasm. It carries out the reaction L-threonylcarbamoyladenylate + adenosine(37) in tRNA = N(6)-L-threonylcarbamoyladenosine(37) in tRNA + AMP + H(+). In terms of biological role, required for the formation of a threonylcarbamoyl group on adenosine at position 37 (t(6)A37) in tRNAs that read codons beginning with adenine. Is involved in the transfer of the threonylcarbamoyl moiety of threonylcarbamoyl-AMP (TC-AMP) to the N6 group of A37, together with TsaE and TsaB. TsaD likely plays a direct catalytic role in this reaction. This is tRNA N6-adenosine threonylcarbamoyltransferase from Thermomicrobium roseum (strain ATCC 27502 / DSM 5159 / P-2).